Consider the following 344-residue polypeptide: MRLGVLDVGSNTVHLLVVDAHRGGHPTPMSSTKATLRLAEATDSSGKITKRGADKLISTIDEFAKIAISSGCAELMAFATSAVRDAENSEDVLSRVRKETGVELQALRGEDESRLTFLAVRRWYGWSAGRILNLDIGGGSLEVSSGVDEEPEIALSLPLGAGRLTREWLPDDPPGRRRVAMLRDWLDAELAEPSVTVLEAGSPDLAVATSKTFRSLARLTGAAPSMAGPRVKRTLTANGLRQLIAFISRMTAVDRAELEGVSADRAPQIVAGALVAEASMRALSIEAVEICPWALREGLILRKLDSEADGTALIESSSVHTSVRAVGGQPADRNAANRSRGSKP.

The tract at residues 319–344 is disordered; the sequence is VHTSVRAVGGQPADRNAANRSRGSKP.

It belongs to the GppA/Ppx family. Homodimer.

It catalyses the reaction [phosphate](n) + H2O = [phosphate](n-1) + phosphate + H(+). In terms of biological role, degradation of inorganic polyphosphates (polyP). Releases orthophosphate processively from the ends of the polyP chain. This is Exopolyphosphatase 1 from Mycobacterium bovis (strain ATCC BAA-935 / AF2122/97).